The chain runs to 310 residues: Phosphoribosylaminoimidazole-succinocarboxamide synthase (310 aa).

It belongs to the SAICAR synthetase family.

It carries out the reaction 5-amino-1-(5-phospho-D-ribosyl)imidazole-4-carboxylate + L-aspartate + ATP = (2S)-2-[5-amino-1-(5-phospho-beta-D-ribosyl)imidazole-4-carboxamido]succinate + ADP + phosphate + 2 H(+). Its pathway is purine metabolism; IMP biosynthesis via de novo pathway; 5-amino-1-(5-phospho-D-ribosyl)imidazole-4-carboxamide from 5-amino-1-(5-phospho-D-ribosyl)imidazole-4-carboxylate: step 1/2. The sequence is that of Phosphoribosylaminoimidazole-succinocarboxamide synthase from Xanthomonas campestris pv. campestris (strain B100).